A 318-amino-acid polypeptide reads, in one-letter code: Pantothenate kinase (318 aa).

An ATP-binding site is contributed by 96-103 (GSVAVGKS).

The protein belongs to the prokaryotic pantothenate kinase family.

It is found in the cytoplasm. It catalyses the reaction (R)-pantothenate + ATP = (R)-4'-phosphopantothenate + ADP + H(+). The protein operates within cofactor biosynthesis; coenzyme A biosynthesis; CoA from (R)-pantothenate: step 1/5. This chain is Pantothenate kinase, found in Rhodopseudomonas palustris (strain BisA53).